Reading from the N-terminus, the 254-residue chain is Protein U52 (254 aa).

Belongs to the herpesviridae UL79 family.

This is Protein U52 (U52) from Homo sapiens (Human).